Here is a 210-residue protein sequence, read N- to C-terminus: Large ribosomal subunit protein uL4 (210 aa).

The interval 46-77 is disordered; that stretch reads QGTHKSKERGEIAGSTKKIKKQKGTGTARAGS.

It belongs to the universal ribosomal protein uL4 family. In terms of assembly, part of the 50S ribosomal subunit.

One of the primary rRNA binding proteins, this protein initially binds near the 5'-end of the 23S rRNA. It is important during the early stages of 50S assembly. It makes multiple contacts with different domains of the 23S rRNA in the assembled 50S subunit and ribosome. In terms of biological role, forms part of the polypeptide exit tunnel. The sequence is that of Large ribosomal subunit protein uL4 from Amoebophilus asiaticus (strain 5a2).